The chain runs to 166 residues: NADH-quinone oxidoreductase subunit B 1 (166 aa).

Cys39, Cys40, Cys106, and Cys135 together coordinate [4Fe-4S] cluster.

It belongs to the complex I 20 kDa subunit family. NDH-1 is composed of 14 different subunits. Subunits NuoB, C, D, E, F, and G constitute the peripheral sector of the complex. The cofactor is [4Fe-4S] cluster.

The protein resides in the cell membrane. The catalysed reaction is a quinone + NADH + 5 H(+)(in) = a quinol + NAD(+) + 4 H(+)(out). Functionally, NDH-1 shuttles electrons from NADH, via FMN and iron-sulfur (Fe-S) centers, to quinones in the respiratory chain. The immediate electron acceptor for the enzyme in this species is believed to be a menaquinone. Couples the redox reaction to proton translocation (for every two electrons transferred, four hydrogen ions are translocated across the cytoplasmic membrane), and thus conserves the redox energy in a proton gradient. In Symbiobacterium thermophilum (strain DSM 24528 / JCM 14929 / IAM 14863 / T), this protein is NADH-quinone oxidoreductase subunit B 1.